Reading from the N-terminus, the 2014-residue chain is Fatty acid synthase beta subunit pigK (2014 aa).

The tract at residues 144 to 515 is acetyltransferase (AT) domain; that stretch reads LAAVFGGQST…KDGQGVRVII (372 aa). The active-site For acetyltransferase activity is Ser263. The segment at 570–815 is enoyl reductase (ER) domain; that stretch reads SRLLDTPPLM…LITEASGVSD (246 aa). Residues 1126–1606 form a dehydratase (DH) domain region; sequence RSGSPWIHAL…LPGDRLLVNV (481 aa). One can recognise a MaoC-like domain in the interval 1514–1627; the sequence is PGWPGVSSLE…FNVSAFKQAT (114 aa). The segment at 1645 to 2005 is malonyl/palmitoyl transferase (MT/PT) domain; that stretch reads FFFTGQGSQK…VREVFNITQS (361 aa). Ser1790 functions as the For malonyltransferase activity in the catalytic mechanism.

This sequence belongs to the fungal fatty acid synthetase subunit beta family. As to quaternary structure, [Alpha(6)beta(6)] hexamers of two multifunctional subunits (alpha and beta).

The catalysed reaction is acetyl-CoA + n malonyl-CoA + 2n NADPH + 4n H(+) = a long-chain-acyl-CoA + n CoA + n CO2 + 2n NADP(+).. The enzyme catalyses holo-[ACP] + acetyl-CoA = acetyl-[ACP] + CoA. It carries out the reaction holo-[ACP] + malonyl-CoA = malonyl-[ACP] + CoA. It catalyses the reaction a (3R)-hydroxyacyl-[ACP] = a (2E)-enoyl-[ACP] + H2O. The catalysed reaction is a 2,3-saturated acyl-[ACP] + NAD(+) = a (2E)-enoyl-[ACP] + NADH + H(+). The enzyme catalyses (9Z)-octadecenoyl-[ACP] + H2O = (9Z)-octadecenoate + holo-[ACP] + H(+). It functions in the pathway secondary metabolite biosynthesis. Fatty acid synthase subunit beta; part of the gene cluster that mediates the biosynthesis of azaphilone pigments (MonAzPs), a complex mixture of compounds with a common azaphilone skeleton very widely used as food colorants. PigJ and pigK form the two subunits of a dedicated fungal fatty acid synthase (FAS) that produces the side chain fatty acyl moiety of MonAzPs, a beta-keto fatty acid. The chain length control of the pigJ-pigK FAS is somewhat flexible as MonAzPs features either a beta-ketooctanoic or a beta-ketodecanoic acid moiety. The beta-ketoacyl-ACP probably serves as the substrate for the acetyltransferase pigD that directly transfers the fatty acyl chain to the C-4 alcohol of the pyran ring. The first step of the pathway is performed by the nrPKS pigA that forms the hexaketide precursor from successive condensations of five malonyl-CoA units, with a simple acetyl-CoA starter unit. The role of esterase pigG is not clear, but it may play at most a supplementary role in the formation of the benzaldehyde produced by the pigA nrPKS. This very reactive benzaldehyde is intercepted by the pigC ketoreductase that to provide the first stable enzyme-free MonAzPs intermediate, 6-(4-hydroxy-2-oxopentyl)-3-methyl-2,4-dioxocyclohexane carbaldehyde, also known as M7PKS-1. The FAD-dependent monooxygenase pigN hydroxylates M7PKS-1 at C-4, which triggers the formation of the pyran ring. PigJ, pigK and pigD are involved in the acetylation of the pyran ring. PigJ and pigK form the two subunits of a dedicated fungal FAS that produces the side chain fatty acyl moiety of MonAzPs and pigD transfers the fatty acyl chain to the C-4 alcohol. PigM and pigO are involved in the elimination of the omega-1 alcohol. PigM acts as an O-acetyltransferase that synthesizes the putative O-11 acetyl intermediate whereas pigO eliminates acetic acid to yield an intermediate with a C10(11) double bond. The dehydration of the C-11 alcohol followed by the reduction of the C6(7) double bond by the NAD(P)H-dependent oxidoreductase pigE increases the electrophilicity of the C-5 ketone of the resulting acyl benzopyran. This in turn sets up the C-5 ketone for an intramolecular Knoevenagel aldol condensation with the C-20 enol of the side chain. This condensation affords the characteristic linear tricyclic carbon skeletons of the yellow pigments that serve as the common precursors for the classical yellow pigments monascin and ankaflavin, orange pigments rubopunctatin and monascorubrin, and red pigments ribropunctamine and monascorubramine. The FAD-dependent oxidoreductase pigF is especially invoved in the biosynthesis of orange and red pigments via desaturation of C6(7). This chain is Fatty acid synthase beta subunit pigK, found in Monascus ruber (Mold).